A 694-amino-acid chain; its full sequence is Nuclear cap-binding protein subunit 3 (694 aa).

A disordered region spans residues 1–47; the sequence is MAAVRSLRVSVKSDSASDRSESDSESDSDRDAREAEPMEVEEGEVEL. The segment covering 15–36 has biased composition (basic and acidic residues); the sequence is SASDRSESDSESDSDRDAREAE. Acidic residues predominate over residues 37–47; it reads PMEVEEGEVEL. The interval 126–187 is RNA recognition motif (RRM) domain; that stretch reads EALHMSGVDD…LSRMPDKEEV (62 aa). Positions 155–158 match the WLDD motif; essential for 7-methylguanosine-containing mRNA cap binding motif; that stretch reads WIDD. Disordered stretches follow at residues 183–277, 336–430, and 461–694; these read DKEE…VKPF, ILKT…MDYD, and LRNS…DSDS. Residues 189–203 show a composition bias toward polar residues; it reads NTDSSKPSELPVQTQ. Positions 212 to 235 are enriched in acidic residues; it reads DDDDDDDEEEEGEVDDDDDDDEED. Residues 236–264 are compositionally biased toward basic and acidic residues; sequence EKARDIEDETEKKPQETRETSLSQAERDS. A compositionally biased stretch (acidic residues) spans 368–386; sequence EPIEEEEEEEEDGEEDMDA. Residues 387–404 show a composition bias toward basic and acidic residues; sequence DDRVVEYKDRGEKERGPR. Residues 477–496 show a composition bias toward gly residues; the sequence is IGGGGGGGSGGAVEGRGEGG. Basic and acidic residues-rich tracts occupy residues 501–517, 563–595, and 605–618; these read TSEK…EKRQ, SRRE…DKKT, and SHKD…DKPS. The segment covering 634–646 has biased composition (acidic residues); sequence DSDGVEDEDEEDD. The segment covering 685 to 694 has biased composition (low complexity); that stretch reads DGSNGSDSDS.

It belongs to the NCBP3 family. As to quaternary structure, component of an alternative cap-binding complex (CBC) composed of NCBP1/CBP80 and NCBP3.

The protein localises to the nucleus. The protein resides in the cytoplasm. Associates with NCBP1/CBP80 to form an alternative cap-binding complex (CBC) which plays a key role in mRNA export. NCBP3 serves as adapter protein linking the capped RNAs (m7GpppG-capped RNA) to NCBP1/CBP80. Unlike the conventional CBC with NCBP2 which binds both small nuclear RNA (snRNA) and messenger (mRNA) and is involved in their export from the nucleus, the alternative CBC with NCBP3 does not bind snRNA and associates only with mRNA thereby playing a role in only mRNA export. This Danio rerio (Zebrafish) protein is Nuclear cap-binding protein subunit 3.